The sequence spans 35 residues: Cupiennin-1c (35 aa).

At Glu35 the chain carries Glutamic acid 1-amide.

Expressed by the venom gland.

The protein localises to the secreted. In terms of biological role, has antimicrobial activity against E.coli, E.faecalis, P.aeruginosa, and S.aureus. The protein is Cupiennin-1c of Cupiennius salei (American wandering spider).